The following is a 772-amino-acid chain: Phenylalanine--tRNA ligase beta subunit (772 aa).

Positions 40-158 (IKPSTNLVFA…DHYKTPNQIF (119 aa)) constitute a tRNA-binding domain. The 72-residue stretch at 397 to 468 (SVHNVIKNKI…KKISIQEIKP (72 aa)) folds into the B5 domain. Mg(2+)-binding residues include Asp446, Asp452, Glu455, and Asp456. One can recognise an FDX-ACB domain in the interval 691–772 (SMYHDVIRDI…QEVNNYLKQF (82 aa)).

The protein belongs to the phenylalanyl-tRNA synthetase beta subunit family. Type 1 subfamily. Tetramer of two alpha and two beta subunits. Mg(2+) serves as cofactor.

Its subcellular location is the cytoplasm. The catalysed reaction is tRNA(Phe) + L-phenylalanine + ATP = L-phenylalanyl-tRNA(Phe) + AMP + diphosphate + H(+). This chain is Phenylalanine--tRNA ligase beta subunit (pheT), found in Ureaplasma parvum serovar 3 (strain ATCC 700970).